A 352-amino-acid chain; its full sequence is Homoserine O-acetyltransferase (352 aa).

One can recognise an AB hydrolase-1 domain in the interval 37–330; sequence NAVLVCHALT…APHGHDTFLI (294 aa). Residue Ser-133 is the Nucleophile of the active site. Substrate is bound at residue Arg-206. Residues Asp-296 and His-325 contribute to the active site. Residue Asp-326 participates in substrate binding.

It belongs to the AB hydrolase superfamily. MetX family. In terms of assembly, homodimer.

It is found in the cytoplasm. It carries out the reaction L-homoserine + acetyl-CoA = O-acetyl-L-homoserine + CoA. Its pathway is amino-acid biosynthesis; L-methionine biosynthesis via de novo pathway; O-acetyl-L-homoserine from L-homoserine: step 1/1. Transfers an acetyl group from acetyl-CoA to L-homoserine, forming acetyl-L-homoserine. The protein is Homoserine O-acetyltransferase of Salinibacter ruber (strain DSM 13855 / M31).